The sequence spans 514 residues: 3-octaprenyl-4-hydroxybenzoate carboxy-lyase (514 aa).

Mn(2+) is bound at residue asparagine 177. Residues 180-182 (IYR), 194-196 (RWL), and 199-200 (RG) each bind prenylated FMN. Glutamate 243 is a binding site for Mn(2+). The active-site Proton donor is the aspartate 314.

This sequence belongs to the UbiD family. In terms of assembly, homohexamer. The cofactor is prenylated FMN. Mn(2+) is required as a cofactor.

The protein resides in the cell membrane. The catalysed reaction is a 4-hydroxy-3-(all-trans-polyprenyl)benzoate + H(+) = a 2-(all-trans-polyprenyl)phenol + CO2. Its pathway is cofactor biosynthesis; ubiquinone biosynthesis. In terms of biological role, catalyzes the decarboxylation of 3-octaprenyl-4-hydroxy benzoate to 2-octaprenylphenol, an intermediate step in ubiquinone biosynthesis. This chain is 3-octaprenyl-4-hydroxybenzoate carboxy-lyase, found in Bordetella bronchiseptica (strain ATCC BAA-588 / NCTC 13252 / RB50) (Alcaligenes bronchisepticus).